We begin with the raw amino-acid sequence, 500 residues long: Zinc finger protein ENHYDROUS (500 aa).

The segment at 1–42 is disordered; that stretch reads MPVDLDNSSTVSGDASVSSTGNQNLTPKSVGKKKRNLPGMPD. Residues 8 to 21 show a composition bias toward low complexity; sequence SSTVSGDASVSSTG. Phosphoserine is present on Ser51. C2H2-type zinc fingers lie at residues 61–83 and 102–132; these read FVCEICNKGFQRDQNLQLHRRGH and YVCPVSGCVHHDPSRALGDLTGIKKHFCRKH. The Nuclear localization signal motif lies at 124-131; it reads IKKHFCRK. Residues 137–160 form a C2H2-type 2; degenerate zinc finger; the sequence is WKCEKCSKKYAVQSDWKAHSKICG. The Zn(2+) site is built by Cys139, Cys142, His155, Cys159, Cys166, Cys168, His181, and Cys185. Residues 164-187 form a CCHC-type 2; atypical zinc finger; that stretch reads YKCDCGTLFSRRDSFITHRAFCDA. Residues 174–186 are SHR-binding; it reads RRDSFITHRAFCD. The segment at 196–236 is disordered; sequence HTQSKKLYPETVTRKNPEIEQKSPAAVESSPSLPPSSPPSV. The segment covering 207–216 has biased composition (basic and acidic residues); the sequence is VTRKNPEIEQ.

As to quaternary structure, interacts with the DELLA proteins (e.g. GAI/RGA2, RGA, RGL1, RGL2 and RGLG3), acting as coactivators. As to expression, at 3 days post anthesis (DPA), expressed in the chalazal endosperm region. By 6 DPA, expressed in the endosperm and embryo. In fully germinated seed, strongest expression in the root tip and not detected in the cotyledons. In 4-days old seedlings, restricted to the vasculature of the cotyledons, the shoot apical meristem region, and the root tip. By 8 days, restricted to newly emerged leaves.

The protein resides in the nucleus. Its function is as follows. Transcription factor promoting the transition to germination by regulating light and hormonal signaling during seed maturation. Acts as a positive regulator of phytochrome and/or gibberellin action. The protein is Zinc finger protein ENHYDROUS of Arabidopsis thaliana (Mouse-ear cress).